The chain runs to 301 residues: Protoheme IX farnesyltransferase (301 aa).

A run of 9 helical transmembrane segments spans residues 16–36, 41–61, 93–113, 114–134, 141–161, 172–192, 217–237, 238–258, and 273–293; these read VVAL…PGIP, IQSG…AAAI, VFAG…VNLI, TAVL…VYLK, IVIG…AVTG, SLLV…LAIF, QILL…ATGM, SGVF…WYAW, and FGYS…DHWL.

Belongs to the UbiA prenyltransferase family. Protoheme IX farnesyltransferase subfamily.

The protein resides in the cell inner membrane. It carries out the reaction heme b + (2E,6E)-farnesyl diphosphate + H2O = Fe(II)-heme o + diphosphate. The protein operates within porphyrin-containing compound metabolism; heme O biosynthesis; heme O from protoheme: step 1/1. Its function is as follows. Converts heme B (protoheme IX) to heme O by substitution of the vinyl group on carbon 2 of heme B porphyrin ring with a hydroxyethyl farnesyl side group. The sequence is that of Protoheme IX farnesyltransferase from Xylella fastidiosa (strain 9a5c).